The following is a 201-amino-acid chain: Retinol-binding protein 4 (201 aa).

The signal sequence occupies residues 1–18 (MEWVWALVLLAALGSGRG). 3 cysteine pairs are disulfide-bonded: cysteine 22/cysteine 178, cysteine 88/cysteine 192, and cysteine 138/cysteine 147. Glutamine 116 provides a ligand contact to substrate. Arginine 139 carries the post-translational modification Omega-N-methylarginine.

The protein belongs to the calycin superfamily. Lipocalin family. As to quaternary structure, interacts with TTR. Interaction with TTR prevents its loss by filtration through the kidney glomeruli. Interacts with STRA6.

The protein localises to the secreted. Retinol-binding protein that mediates retinol transport in blood plasma. Delivers retinol from the liver stores to the peripheral tissues. Transfers the bound all-trans retinol to STRA6, that then facilitates retinol transport across the cell membrane. In Oryctolagus cuniculus (Rabbit), this protein is Retinol-binding protein 4 (RBP4).